The chain runs to 123 residues: Large ribosomal subunit protein uL14 (123 aa).

This sequence belongs to the universal ribosomal protein uL14 family. As to quaternary structure, part of the 50S ribosomal subunit. Forms a cluster with proteins L3 and L19. In the 70S ribosome, L14 and L19 interact and together make contacts with the 16S rRNA in bridges B5 and B8.

Binds to 23S rRNA. Forms part of two intersubunit bridges in the 70S ribosome. This chain is Large ribosomal subunit protein uL14, found in Blochmanniella floridana.